The primary structure comprises 912 residues: Protein translocase subunit SecA (912 aa).

ATP contacts are provided by residues Q87, 105–109, and D508; that span reads GEGKT. A disordered region spans residues 869-912; it reads EQMQGGNAPVPVSQVTRDEPKVGRNDPCPCGSGKKYKHCHGQLS. Positions 896, 898, 907, and 908 each coordinate Zn(2+). Positions 902–912 are enriched in basic residues; that stretch reads KKYKHCHGQLS.

The protein belongs to the SecA family. Monomer and homodimer. Part of the essential Sec protein translocation apparatus which comprises SecA, SecYEG and auxiliary proteins SecDF-YajC and YidC. Requires Zn(2+) as cofactor.

The protein localises to the cell inner membrane. The protein resides in the cytoplasm. It catalyses the reaction ATP + H2O + cellular proteinSide 1 = ADP + phosphate + cellular proteinSide 2.. Its function is as follows. Part of the Sec protein translocase complex. Interacts with the SecYEG preprotein conducting channel. Has a central role in coupling the hydrolysis of ATP to the transfer of proteins into and across the cell membrane, serving both as a receptor for the preprotein-SecB complex and as an ATP-driven molecular motor driving the stepwise translocation of polypeptide chains across the membrane. The protein is Protein translocase subunit SecA of Xanthomonas axonopodis pv. citri (strain 306).